A 150-amino-acid polypeptide reads, in one-letter code: Myosin, essential light chain (150 aa).

EF-hand domains are found at residues 3–38 and 75–110; these read ASADQIQECFSIFDKDNDGKVSVEDIGACLRSLGKS and EQQKEMLDAFKALDKEGHGTIQGAELRQLLTTLGDY. Ca(2+) is bound by residues Asp-16, Asp-18, Asp-20, Lys-22, and Asp-27.

In terms of assembly, myosin is a hexamer of 2 heavy chains and 4 light chains (two regulatory light chains and two essential light chains).

This is Myosin, essential light chain (mlcE) from Dictyostelium discoideum (Social amoeba).